We begin with the raw amino-acid sequence, 235 residues long: 5'-methylthioadenosine/S-adenosylhomocysteine nucleosidase (235 aa).

Residue Glu12 is the Proton acceptor of the active site. Residues Gly78, Ile152, and 173–174 (ME) each bind substrate. Asp197 serves as the catalytic Proton donor.

It belongs to the PNP/UDP phosphorylase family. MtnN subfamily. In terms of assembly, homodimer.

It catalyses the reaction S-adenosyl-L-homocysteine + H2O = S-(5-deoxy-D-ribos-5-yl)-L-homocysteine + adenine. The enzyme catalyses S-methyl-5'-thioadenosine + H2O = 5-(methylsulfanyl)-D-ribose + adenine. The catalysed reaction is 5'-deoxyadenosine + H2O = 5-deoxy-D-ribose + adenine. Its pathway is amino-acid biosynthesis; L-methionine biosynthesis via salvage pathway; S-methyl-5-thio-alpha-D-ribose 1-phosphate from S-methyl-5'-thioadenosine (hydrolase route): step 1/2. Catalyzes the irreversible cleavage of the glycosidic bond in both 5'-methylthioadenosine (MTA) and S-adenosylhomocysteine (SAH/AdoHcy) to adenine and the corresponding thioribose, 5'-methylthioribose and S-ribosylhomocysteine, respectively. Also cleaves 5'-deoxyadenosine, a toxic by-product of radical S-adenosylmethionine (SAM) enzymes, into 5-deoxyribose and adenine. Thus, is required for in vivo function of the radical SAM enzymes biotin synthase and lipoic acid synthase, that are inhibited by 5'-deoxyadenosine accumulation. This Buchnera aphidicola subsp. Schizaphis graminum (strain Sg) protein is 5'-methylthioadenosine/S-adenosylhomocysteine nucleosidase.